The following is a 337-amino-acid chain: tRNA N6-adenosine threonylcarbamoyltransferase (337 aa).

His-111 and His-115 together coordinate Fe cation. Substrate-binding positions include 134–138 (LVSGG), Asp-167, Gly-180, and Asn-272. Asp-300 contacts Fe cation.

This sequence belongs to the KAE1 / TsaD family. The cofactor is Fe(2+).

Its subcellular location is the cytoplasm. It catalyses the reaction L-threonylcarbamoyladenylate + adenosine(37) in tRNA = N(6)-L-threonylcarbamoyladenosine(37) in tRNA + AMP + H(+). Required for the formation of a threonylcarbamoyl group on adenosine at position 37 (t(6)A37) in tRNAs that read codons beginning with adenine. Is involved in the transfer of the threonylcarbamoyl moiety of threonylcarbamoyl-AMP (TC-AMP) to the N6 group of A37, together with TsaE and TsaB. TsaD likely plays a direct catalytic role in this reaction. The polypeptide is tRNA N6-adenosine threonylcarbamoyltransferase (Nitrosomonas europaea (strain ATCC 19718 / CIP 103999 / KCTC 2705 / NBRC 14298)).